Consider the following 355-residue polypeptide: Phenylalanine--tRNA ligase alpha subunit (355 aa).

Residue Glu273 participates in Mg(2+) binding.

Belongs to the class-II aminoacyl-tRNA synthetase family. Phe-tRNA synthetase alpha subunit type 1 subfamily. In terms of assembly, tetramer of two alpha and two beta subunits. It depends on Mg(2+) as a cofactor.

The protein resides in the cytoplasm. It carries out the reaction tRNA(Phe) + L-phenylalanine + ATP = L-phenylalanyl-tRNA(Phe) + AMP + diphosphate + H(+). The polypeptide is Phenylalanine--tRNA ligase alpha subunit (Bifidobacterium longum (strain NCC 2705)).